We begin with the raw amino-acid sequence, 740 residues long: Homeobox protein 4 (740 aa).

Polar residues predominate over residues Met1 to Asp13. Disordered regions lie at residues Met1–Ser41 and Asn179–Ile491. Low complexity-rich tracts occupy residues Asn14–Asn34, Asn179–Asn241, Asn251–Asn288, and Ser303–Ser316. The stretch at Asn254–Asn287 forms a coiled coil. Residues Asn317 to Ser328 are compositionally biased toward basic residues. Residues His339–Leu363 show a composition bias toward polar residues. Composition is skewed to low complexity over residues Ser365–Gln390 and Asn397–Ile491. Residues Asn472 to Ile500 adopt a coiled-coil conformation. The homeobox DNA-binding region spans Arg605–Leu667. A compositionally biased stretch (low complexity) spans Asn686–His722. The interval Asn686–Asp740 is disordered. The segment covering Glu726–Asp740 has biased composition (acidic residues).

It is found in the nucleus. In terms of biological role, putative transcription factor. This chain is Homeobox protein 4 (hbx4), found in Dictyostelium discoideum (Social amoeba).